Consider the following 590-residue polypeptide: Putative histone-lysine N-methyltransferase PRDM6 (590 aa).

The disordered stretch occupies residues 25–87; sequence QLFPHGGGGP…STPASSSTSA (63 aa). Residues 29–42 show a composition bias toward gly residues; the sequence is HGGGGPLKGGGAAG. A compositionally biased stretch (low complexity) spans 71–87; it reads ASLSSASSTPASSSTSA. Residues 241–360 form the SET domain; the sequence is REVCLCTSTV…RGTELLVWYN (120 aa). The segment at 468–490 adopts a C2H2-type 1; degenerate zinc-finger fold; the sequence is WKCGQCFKTFTQRILLQMHVCTQ. 2 consecutive C2H2-type zinc fingers follow at residues 496–518 and 524–546; these read YQCGHCSQSFSQPSELRNHVVTH and FKCGYCGRAFAGATTLNNHIRTH. The C2H2-type 4; degenerate zinc finger occupies 552 to 574; sequence FKCERCERSFTQATQLSRHQRMP.

The protein belongs to the class V-like SAM-binding methyltransferase superfamily. As to quaternary structure, interacts with HDAC1, HDAC2, HDAC3, CBX1 and EP300.

Its subcellular location is the nucleus. It carries out the reaction L-lysyl(20)-[histone H4] + S-adenosyl-L-methionine = N(6)-methyl-L-lysyl(20)-[histone H4] + S-adenosyl-L-homocysteine + H(+). In terms of biological role, putative histone methyltransferase that acts as a transcriptional repressor of smooth muscle gene expression. Promotes the transition from differentiated to proliferative smooth muscle by suppressing differentiation and maintaining the proliferative potential of vascular smooth muscle cells. Also plays a role in endothelial cells by inhibiting endothelial cell proliferation, survival and differentiation. It is unclear whether it has histone methyltransferase activity in vivo. According to some authors, it does not act as a histone methyltransferase by itself and represses transcription by recruiting EHMT2/G9a. According to others, it possesses histone methyltransferase activity when associated with other proteins and specifically methylates 'Lys-20' of histone H4 in vitro. 'Lys-20' methylation represents a specific tag for epigenetic transcriptional repression. This is Putative histone-lysine N-methyltransferase PRDM6 (PRDM6) from Bos taurus (Bovine).